The chain runs to 273 residues: HLA class II histocompatibility antigen, DO beta chain (273 aa).

The N-terminal stretch at 1–26 (MGSGWVPWVVALLVNLTRLDSSMTQG) is a signal peptide. Positions 27–120 (TDSPEDFVIQ…LGAPFTVGRK (94 aa)) are beta-1. At 27 to 224 (TDSPEDFVIQ…RAQSEYSWRK (198 aa)) the chain is on the extracellular side. 2 disulfides stabilise this stretch: cysteine 41/cysteine 105 and cysteine 143/cysteine 199. Residue asparagine 45 is glycosylated (N-linked (GlcNAc...) asparagine). The tract at residues 121–214 (VQPEVTVYPE…SLLSPVSVEW (94 aa)) is beta-2. Residues 123–213 (PEVTVYPERT…SSLLSPVSVE (91 aa)) enclose the Ig-like C1-type domain. The segment at 215 to 224 (RAQSEYSWRK) is connecting peptide. A helical membrane pass occupies residues 225 to 245 (MLSGIAAFLLGLIFLLVGIVI). Topologically, residues 246 to 273 (QLRAQKGYVRTQMSGNEVSRAVLLPQSC) are cytoplasmic.

The protein belongs to the MHC class II family. In terms of assembly, heterodimer of an alpha chain (DOA) and a beta chain (DOB). Forms a heterotetrameric complex with an HLA-DM molecule during intracellular transport in endosomal/lysosomal compartments in B-cells.

The protein localises to the endosome membrane. It localises to the lysosome membrane. In terms of biological role, important modulator in the HLA class II restricted antigen presentation pathway by interaction with the HLA-DM molecule in B-cells. Modifies peptide exchange activity of HLA-DM. In Homo sapiens (Human), this protein is HLA class II histocompatibility antigen, DO beta chain (HLA-DOB).